We begin with the raw amino-acid sequence, 183 residues long: Glutathione-regulated potassium-efflux system ancillary protein KefG (183 aa).

Belongs to the NAD(P)H dehydrogenase (quinone) family. KefG subfamily. In terms of assembly, interacts with KefB.

Its subcellular location is the cell inner membrane. It catalyses the reaction a quinone + NADH + H(+) = a quinol + NAD(+). It carries out the reaction a quinone + NADPH + H(+) = a quinol + NADP(+). Functionally, regulatory subunit of a potassium efflux system that confers protection against electrophiles. Required for full activity of KefB. The protein is Glutathione-regulated potassium-efflux system ancillary protein KefG of Serratia proteamaculans (strain 568).